Consider the following 141-residue polypeptide: METIGFHYVVEAAGCDPEILGNADKIRQIFLEAAKVGKMEVKASYFFKFSPTGVSGVVIVAESHISIHTWPEKGYAALDVYTCGTTADPEKAVDYILDKIKAQYAHVSEIKRGIEEDDETFTHMILTWEEKLERKNGDEKS.

Serine 63 functions as the Schiff-base intermediate with substrate; via pyruvic acid in the catalytic mechanism. Serine 63 carries the post-translational modification Pyruvic acid (Ser); by autocatalysis. Histidine 68 acts as the Proton acceptor; for processing activity in catalysis. Catalysis depends on cysteine 83, which acts as the Proton donor; for catalytic activity.

The protein belongs to the prokaryotic AdoMetDC family. Type 1 subfamily. In terms of assembly, heterotetramer of two alpha and two beta chains arranged as a dimer of alpha/beta heterodimers. Pyruvate is required as a cofactor. Post-translationally, is synthesized initially as an inactive proenzyme. Formation of the active enzyme involves a self-maturation process in which the active site pyruvoyl group is generated from an internal serine residue via an autocatalytic post-translational modification. Two non-identical subunits are generated from the proenzyme in this reaction, and the pyruvate is formed at the N-terminus of the alpha chain, which is derived from the carboxyl end of the proenzyme. The post-translation cleavage follows an unusual pathway, termed non-hydrolytic serinolysis, in which the side chain hydroxyl group of the serine supplies its oxygen atom to form the C-terminus of the beta chain, while the remainder of the serine residue undergoes an oxidative deamination to produce ammonia and the pyruvoyl group blocking the N-terminus of the alpha chain.

The catalysed reaction is S-adenosyl-L-methionine + H(+) = S-adenosyl 3-(methylsulfanyl)propylamine + CO2. The protein operates within amine and polyamine biosynthesis; S-adenosylmethioninamine biosynthesis; S-adenosylmethioninamine from S-adenosyl-L-methionine: step 1/1. Catalyzes the decarboxylation of S-adenosylmethionine to S-adenosylmethioninamine (dcAdoMet), the propylamine donor required for the synthesis of the polyamines spermine and spermidine from the diamine putrescine. The protein is S-adenosylmethionine decarboxylase proenzyme of Thermococcus onnurineus (strain NA1).